The following is a 191-amino-acid chain: Xanthine phosphoribosyltransferase (191 aa).

Residues Leu-20 and Asn-27 each coordinate xanthine. 128-132 (ANGQA) is a binding site for 5-phospho-alpha-D-ribose 1-diphosphate. Xanthine is bound at residue Lys-156.

It belongs to the purine/pyrimidine phosphoribosyltransferase family. Xpt subfamily. Homodimer.

The protein resides in the cytoplasm. It catalyses the reaction XMP + diphosphate = xanthine + 5-phospho-alpha-D-ribose 1-diphosphate. Its pathway is purine metabolism; XMP biosynthesis via salvage pathway; XMP from xanthine: step 1/1. In terms of biological role, converts the preformed base xanthine, a product of nucleic acid breakdown, to xanthosine 5'-monophosphate (XMP), so it can be reused for RNA or DNA synthesis. This is Xanthine phosphoribosyltransferase from Levilactobacillus brevis (strain ATCC 367 / BCRC 12310 / CIP 105137 / JCM 1170 / LMG 11437 / NCIMB 947 / NCTC 947) (Lactobacillus brevis).